A 508-amino-acid polypeptide reads, in one-letter code: ATP synthase subunit alpha, chloroplastic (508 aa).

172–179 provides a ligand contact to ATP; the sequence is GDRQTGKT.

It belongs to the ATPase alpha/beta chains family. As to quaternary structure, F-type ATPases have 2 components, CF(1) - the catalytic core - and CF(0) - the membrane proton channel. CF(1) has five subunits: alpha(3), beta(3), gamma(1), delta(1), epsilon(1). CF(0) has four main subunits: a, b, b' and c.

The protein resides in the plastid. It is found in the chloroplast thylakoid membrane. It carries out the reaction ATP + H2O + 4 H(+)(in) = ADP + phosphate + 5 H(+)(out). Produces ATP from ADP in the presence of a proton gradient across the membrane. The alpha chain is a regulatory subunit. The chain is ATP synthase subunit alpha, chloroplastic from Angiopteris evecta (Mule's foot fern).